The chain runs to 58 residues: uncharacterized protein (58 aa).

Residues 12 to 32 traverse the membrane as a helical segment; the sequence is VALVYISVYFFSCISLIVYFF.

The protein resides in the membrane. This is an uncharacterized protein from Saccharomyces cerevisiae (strain ATCC 204508 / S288c) (Baker's yeast).